We begin with the raw amino-acid sequence, 138 residues long: Cell division protein SepF (138 aa).

This sequence belongs to the SepF family. In terms of assembly, homodimer. Interacts with FtsZ.

Its subcellular location is the cytoplasm. Cell division protein that is part of the divisome complex and is recruited early to the Z-ring. Probably stimulates Z-ring formation, perhaps through the cross-linking of FtsZ protofilaments. Its function overlaps with FtsA. The sequence is that of Cell division protein SepF from Limosilactobacillus reuteri (strain DSM 20016) (Lactobacillus reuteri).